We begin with the raw amino-acid sequence, 267 residues long: 5'-methylthioadenosine nucleosidase (267 aa).

Glutamate 38 serves as the catalytic Proton acceptor. Residues threonine 116, 199-202 (KDME), and aspartate 225 each bind S-methyl-5'-thioadenosine. Adenine contacts are provided by lysine 199 and aspartate 225. Aspartate 225 acts as the Proton donor in catalysis.

This sequence belongs to the PNP/UDP phosphorylase family. MtnN subfamily. Homodimer. Interacts with CBL3 in a calcium-dependent manner. As to expression, expressed in roots, leaves, stems, cauline leaves and flowers.

The enzyme catalyses S-methyl-5'-thioadenosine + H2O = 5-(methylsulfanyl)-D-ribose + adenine. Its pathway is amino-acid biosynthesis; L-methionine biosynthesis via salvage pathway; S-methyl-5-thio-alpha-D-ribose 1-phosphate from S-methyl-5'-thioadenosine (hydrolase route): step 1/2. Inhibited by CBL3 in a calcium-dependent manner. Inhibited by 5'-methylthiotubercidin (MTT) and by formycin A (FMA). In terms of biological role, enzyme of the methionine cycle that catalyzes the irreversible cleavage of the glycosidic bond in 5'-methylthioadenosine (MTA) to adenine and 5'-methylthioribose. Contributes to the maintenance of AdoMet homeostasis and is required to sustain high rates of ethylene synthesis. Inactive towards S-adenosylhomocysteine (SAH/AdoHcy). The protein is 5'-methylthioadenosine nucleosidase (MTN1) of Arabidopsis thaliana (Mouse-ear cress).